A 234-amino-acid chain; its full sequence is Sugar fermentation stimulation protein homolog (234 aa).

This sequence belongs to the SfsA family.

This is Sugar fermentation stimulation protein homolog from Pseudoalteromonas atlantica (strain T6c / ATCC BAA-1087).